Reading from the N-terminus, the 298-residue chain is MTFSTTKSVAMSPDDDAPSFDINSSRRLMSHSEVESRGNGYEVLQQAGTVRILLSRPERGNALSLSLAKDLTQLFQTFSSQHSVHRIVLTGKGKYFCSGMDLGEELYEDATERCLALQDLFGAIDACPKTTVAAINGPAFGGGVGLAFVCDIRVAVSTSFFCLSEVKLGLCPATVSRFIIREWGVSLARMAMLTARKIHPQALQEMGVLHAVALDEEALKVVTENLLDDLGFAAPQASAWCKALTRKTRNGNSDHDQFARQISETMVAPGSESEYGVAQFRRGRKNIRWEQAECLHTR.

Residues 1 to 23 (MTFSTTKSVAMSPDDDAPSFDIN) form a disordered region.

Belongs to the enoyl-CoA hydratase/isomerase family.

The protein operates within mycotoxin biosynthesis. Its function is as follows. Enoyl-CoA hydratase; part of the gene clusters that mediate the biosynthesis of the host-selective toxins (HSTs) AK-toxins responsible for Japanese pear black spot disease by the Japanese pear pathotype. AK-toxins are esters of 9,10-epoxy 8-hydroxy 9-methyldecatrienoic acid (EDA). On cellular level, AK-toxins affect plasma membrane of susceptible cells and cause a sudden increase in loss of K(+) after a few minutes of toxin treatment. The acyl-CoA ligase AKT1, the hydrolase AKT2 and enoyl-CoA hydratase AKT3 are all involved in the biosynthesis of the AK-, AF- and ACT-toxin common 9,10-epoxy-8-hydroxy-9-methyl-decatrienoic acid (EDA) structural moiety. Part of the EDA biosynthesis occurs in the peroxisome since these 3 enzymes are localized in peroxisomes. The exact roles of the 3 enzymes, as well as of additional AK-toxin clusters enzymes, including AKT4, AKT6 and AKTS1, have still to be elucidated. The Cytochrome P450 monooxygenase AKT7 on the other side functions to limit production of EDA and AK-toxin, probably via the catalysis of a side reaction of EDA or its precursor. The sequence is that of Enoyl-CoA hydratase AKT6-1 from Alternaria alternata (Alternaria rot fungus).